The chain runs to 349 residues: Phenylalanine--tRNA ligase alpha subunit (349 aa).

A Mg(2+)-binding site is contributed by glutamate 261.

It belongs to the class-II aminoacyl-tRNA synthetase family. Phe-tRNA synthetase alpha subunit type 1 subfamily. Tetramer of two alpha and two beta subunits. Mg(2+) serves as cofactor.

It localises to the cytoplasm. It carries out the reaction tRNA(Phe) + L-phenylalanine + ATP = L-phenylalanyl-tRNA(Phe) + AMP + diphosphate + H(+). The protein is Phenylalanine--tRNA ligase alpha subunit of Leuconostoc citreum (strain KM20).